Consider the following 571-residue polypeptide: Urease subunit alpha (571 aa).

The region spanning 133–571 is the Urease domain; sequence GGIDTHVHFI…LPLTQRYFLF (439 aa). Ni(2+)-binding residues include His138, His140, and Lys221. The residue at position 221 (Lys221) is an N6-carboxylysine. Substrate is bound at residue His223. Positions 250 and 276 each coordinate Ni(2+). His324 serves as the catalytic Proton donor. Asp364 is a Ni(2+) binding site.

Belongs to the metallo-dependent hydrolases superfamily. Urease alpha subunit family. In terms of assembly, heterotrimer of UreA (gamma), UreB (beta) and UreC (alpha) subunits. Three heterotrimers associate to form the active enzyme. Ni cation is required as a cofactor. Post-translationally, carboxylation allows a single lysine to coordinate two nickel ions.

The protein localises to the cytoplasm. It catalyses the reaction urea + 2 H2O + H(+) = hydrogencarbonate + 2 NH4(+). Its pathway is nitrogen metabolism; urea degradation; CO(2) and NH(3) from urea (urease route): step 1/1. This is Urease subunit alpha from Staphylococcus saprophyticus subsp. saprophyticus (strain ATCC 15305 / DSM 20229 / NCIMB 8711 / NCTC 7292 / S-41).